We begin with the raw amino-acid sequence, 214 residues long: Ribosomal RNA small subunit methyltransferase G (214 aa).

S-adenosyl-L-methionine contacts are provided by residues glycine 81, methionine 86, valine 132 to glutamate 133, and arginine 147.

It belongs to the methyltransferase superfamily. RNA methyltransferase RsmG family.

Its subcellular location is the cytoplasm. It carries out the reaction guanosine(527) in 16S rRNA + S-adenosyl-L-methionine = N(7)-methylguanosine(527) in 16S rRNA + S-adenosyl-L-homocysteine. Specifically methylates the N7 position of guanine in position 527 of 16S rRNA. This is Ribosomal RNA small subunit methyltransferase G from Pseudomonas fluorescens (strain Pf0-1).